The following is a 167-amino-acid chain: Lipoprotein signal peptidase (167 aa).

The next 3 membrane-spanning stretches (helical) occupy residues 7-27 (LFLL…KYWV), 61-81 (FSHW…LWLW), and 87-107 (NKFL…GNLI). Residues aspartate 117 and aspartate 136 contribute to the active site. A helical membrane pass occupies residues 126–146 (IFYFAIFNLADSFITLGVIVI).

The protein belongs to the peptidase A8 family.

It localises to the cell inner membrane. The enzyme catalyses Release of signal peptides from bacterial membrane prolipoproteins. Hydrolyzes -Xaa-Yaa-Zaa-|-(S,diacylglyceryl)Cys-, in which Xaa is hydrophobic (preferably Leu), and Yaa (Ala or Ser) and Zaa (Gly or Ala) have small, neutral side chains.. It functions in the pathway protein modification; lipoprotein biosynthesis (signal peptide cleavage). Its function is as follows. This protein specifically catalyzes the removal of signal peptides from prolipoproteins. The sequence is that of Lipoprotein signal peptidase from Bartonella tribocorum (strain CIP 105476 / IBS 506).